The following is a 271-amino-acid chain: Putative pyruvate, phosphate dikinase regulatory protein (271 aa).

G153–T160 contributes to the ADP binding site.

This sequence belongs to the pyruvate, phosphate/water dikinase regulatory protein family. PDRP subfamily.

It carries out the reaction N(tele)-phospho-L-histidyl/L-threonyl-[pyruvate, phosphate dikinase] + ADP = N(tele)-phospho-L-histidyl/O-phospho-L-threonyl-[pyruvate, phosphate dikinase] + AMP + H(+). It catalyses the reaction N(tele)-phospho-L-histidyl/O-phospho-L-threonyl-[pyruvate, phosphate dikinase] + phosphate + H(+) = N(tele)-phospho-L-histidyl/L-threonyl-[pyruvate, phosphate dikinase] + diphosphate. Functionally, bifunctional serine/threonine kinase and phosphorylase involved in the regulation of the pyruvate, phosphate dikinase (PPDK) by catalyzing its phosphorylation/dephosphorylation. In Shouchella clausii (strain KSM-K16) (Alkalihalobacillus clausii), this protein is Putative pyruvate, phosphate dikinase regulatory protein.